We begin with the raw amino-acid sequence, 199 residues long: Single-stranded DNA cytosine deaminase (199 aa).

A Bipartite nuclear localization signal motif is present at residues 1–30 (MDSLLKKQRQFLYQFKNVRWAKGRHETYLC). Positions 2-26 (DSLLKKQRQFLYQFKNVRWAKGRHE) are interaction with SUPT6H. Residues 23 to 130 (GRHETYLCYV…KAEPEGLRRL (108 aa)) form the CMP/dCMP-type deaminase domain. T27 bears the Phosphothreonine; by PKA mark. S38 carries the phosphoserine; by PKA modification. Residues 39 to 42 (PTSF) form an important for interaction with CTNNBL1 region. H56 provides a ligand contact to Zn(2+). E58 serves as the catalytic Proton donor. 2 residues coordinate Zn(2+): C87 and C90. The segment at 88–116 (YDCARHVADFLRGYPNLSLRIFTARLYFC) is required for interaction with RNF126. The Nuclear export signal motif lies at 184–199 (LYEVDDLRDAFRTLGL).

It belongs to the cytidine and deoxycytidylate deaminase family. Interacts with CTNNBL1; the interaction is important for the immunoglobulin switch activity of AICDA. Interacts (via its NLS) with KPNA1. Interacts with PKA/PRKACA and PRKAR1A/PKR1. Interacts with SUPT6H, TRIM28 and NCL. Directly interacts with MCM3AP; this interaction may favor AICDA recruitment to immunoglobulin variable region genes, hence promoting somatic hypermutations. Zn(2+) is required as a cofactor. Ser-38 is the major site whereas Thr-27 is the minor site of phosphorylation. Phosphorylation regulates its class-switch recombination activity. In terms of processing, probably monoubiquitinated on several residues by RNF126. In terms of tissue distribution, expressed in lymph nodes, spleen and thymus.

The protein localises to the nucleus. The protein resides in the cytoplasm. The enzyme catalyses a 2'-deoxycytidine in single-stranded DNA + H2O + H(+) = a 2'-deoxyuridine in single-stranded DNA + NH4(+). Functionally, single-stranded DNA-specific cytidine deaminase. Involved in somatic hypermutation (SHM), gene conversion, and class-switch recombination (CSR) in B-lymphocytes by deaminating C to U during transcription of Ig-variable (V) and Ig-switch (S) region DNA. Required for several crucial steps of B-cell terminal differentiation necessary for efficient antibody responses. May also play a role in the epigenetic regulation of gene expression by participating in DNA demethylation. This chain is Single-stranded DNA cytosine deaminase (AICDA), found in Bos taurus (Bovine).